A 105-amino-acid polypeptide reads, in one-letter code: Replication restart protein PriB (105 aa).

Residues 1 to 102 (MTANRLTLSG…LHAEQIELID (102 aa)) form the SSB domain.

This sequence belongs to the PriB family. In terms of assembly, homodimer. Interacts with PriA and DnaT. Component of the replication restart primosome. Primosome assembly occurs via a 'hand-off' mechanism. PriA binds to replication forks, subsequently PriB then DnaT bind; DnaT then displaces ssDNA to generate the helicase loading substrate.

Involved in the restart of stalled replication forks, which reloads the replicative helicase on sites other than the origin of replication; the PriA-PriB pathway is the major replication restart pathway. During primosome assembly it facilitates complex formation between PriA and DnaT on DNA; stabilizes PriA on DNA. Stimulates the DNA unwinding activity of PriA helicase. The chain is Replication restart protein PriB from Erwinia tasmaniensis (strain DSM 17950 / CFBP 7177 / CIP 109463 / NCPPB 4357 / Et1/99).